We begin with the raw amino-acid sequence, 432 residues long: Enolase 1 (432 aa).

(2R)-2-phosphoglycerate is bound at residue Gln-163. Catalysis depends on Glu-205, which acts as the Proton donor. 3 residues coordinate Mg(2+): Asp-242, Glu-287, and Asp-314. Residues Lys-339, Arg-368, Ser-369, and Lys-390 each contribute to the (2R)-2-phosphoglycerate site. The active-site Proton acceptor is the Lys-339.

It belongs to the enolase family. Requires Mg(2+) as cofactor.

Its subcellular location is the cytoplasm. The protein resides in the secreted. It localises to the cell surface. The catalysed reaction is (2R)-2-phosphoglycerate = phosphoenolpyruvate + H2O. Its pathway is carbohydrate degradation; glycolysis; pyruvate from D-glyceraldehyde 3-phosphate: step 4/5. Catalyzes the reversible conversion of 2-phosphoglycerate (2-PG) into phosphoenolpyruvate (PEP). It is essential for the degradation of carbohydrates via glycolysis. This chain is Enolase 1, found in Lactobacillus johnsonii (strain CNCM I-12250 / La1 / NCC 533).